The sequence spans 677 residues: Methionine--tRNA ligase (677 aa).

A 'HIGH' region motif is present at residues 14–24 (PYANGAIHLGH). Zn(2+) is bound by residues cysteine 145, cysteine 148, cysteine 158, and cysteine 161. Residues 330–334 (KMSKS) carry the 'KMSKS' region motif. ATP is bound at residue lysine 333. The region spanning 576–677 (DFAKVDLRVA…EGALPGMRVM (102 aa)) is the tRNA-binding domain.

The protein belongs to the class-I aminoacyl-tRNA synthetase family. MetG type 1 subfamily. In terms of assembly, homodimer. Requires Zn(2+) as cofactor.

It localises to the cytoplasm. The catalysed reaction is tRNA(Met) + L-methionine + ATP = L-methionyl-tRNA(Met) + AMP + diphosphate. Is required not only for elongation of protein synthesis but also for the initiation of all mRNA translation through initiator tRNA(fMet) aminoacylation. The chain is Methionine--tRNA ligase from Saccharophagus degradans (strain 2-40 / ATCC 43961 / DSM 17024).